Here is an 85-residue protein sequence, read N- to C-terminus: MAVKIRLRRMGAKKAPFYRIVVADSRSPRDGRFVEEIGYYNPVTEPTIIKFDEEKAVKWIKNGAQPTDIVKKLFDKAGLKDKLGK.

The protein belongs to the bacterial ribosomal protein bS16 family.

In Clostridium kluyveri (strain NBRC 12016), this protein is Small ribosomal subunit protein bS16.